A 509-amino-acid polypeptide reads, in one-letter code: ATP synthase subunit alpha (509 aa).

171–178 (GDRKTGKT) contributes to the ATP binding site.

This sequence belongs to the ATPase alpha/beta chains family. As to quaternary structure, F-type ATPases have 2 components, CF(1) - the catalytic core - and CF(0) - the membrane proton channel. CF(1) has five subunits: alpha(3), beta(3), gamma(1), delta(1), epsilon(1). CF(0) has three main subunits: a(1), b(2) and c(9-12). The alpha and beta chains form an alternating ring which encloses part of the gamma chain. CF(1) is attached to CF(0) by a central stalk formed by the gamma and epsilon chains, while a peripheral stalk is formed by the delta and b chains.

It localises to the cell inner membrane. It carries out the reaction ATP + H2O + 4 H(+)(in) = ADP + phosphate + 5 H(+)(out). Functionally, produces ATP from ADP in the presence of a proton gradient across the membrane. The alpha chain is a regulatory subunit. The sequence is that of ATP synthase subunit alpha from Ehrlichia canis (strain Jake).